The primary structure comprises 677 residues: DNA ligase (677 aa).

NAD(+) contacts are provided by residues 34–38 (DAEYD), 83–84 (SL), and Glu117. The active-site N6-AMP-lysine intermediate is Lys119. Arg140, Glu175, Lys283, and Lys307 together coordinate NAD(+). Residues Cys401, Cys404, Cys419, and Cys425 each coordinate Zn(2+). One can recognise a BRCT domain in the interval 594–677 (SHLSLLHGKT…QYISPNTNEN (84 aa)).

It belongs to the NAD-dependent DNA ligase family. LigA subfamily. Mg(2+) serves as cofactor. Requires Mn(2+) as cofactor.

It catalyses the reaction NAD(+) + (deoxyribonucleotide)n-3'-hydroxyl + 5'-phospho-(deoxyribonucleotide)m = (deoxyribonucleotide)n+m + AMP + beta-nicotinamide D-nucleotide.. Functionally, DNA ligase that catalyzes the formation of phosphodiester linkages between 5'-phosphoryl and 3'-hydroxyl groups in double-stranded DNA using NAD as a coenzyme and as the energy source for the reaction. It is essential for DNA replication and repair of damaged DNA. The polypeptide is DNA ligase (Ehrlichia canis (strain Jake)).